Here is a 492-residue protein sequence, read N- to C-terminus: N-succinylglutamate 5-semialdehyde dehydrogenase (492 aa).

220-225 (GSANTG) provides a ligand contact to NAD(+). Active-site residues include E243 and C277.

The protein belongs to the aldehyde dehydrogenase family. AstD subfamily.

It catalyses the reaction N-succinyl-L-glutamate 5-semialdehyde + NAD(+) + H2O = N-succinyl-L-glutamate + NADH + 2 H(+). The protein operates within amino-acid degradation; L-arginine degradation via AST pathway; L-glutamate and succinate from L-arginine: step 4/5. In terms of biological role, catalyzes the NAD-dependent reduction of succinylglutamate semialdehyde into succinylglutamate. This chain is N-succinylglutamate 5-semialdehyde dehydrogenase, found in Escherichia coli O6:K15:H31 (strain 536 / UPEC).